A 336-amino-acid chain; its full sequence is 3-isopropylmalate dehydrogenase (336 aa).

Substrate-binding residues include Arg87, Arg97, Arg121, and Asp211. Mg(2+)-binding residues include Asp211, Asp235, and Asp239. NAD(+) is bound at residue Gly271–Asp283.

Belongs to the isocitrate and isopropylmalate dehydrogenases family. LeuB type 2 subfamily. Homodimer. It depends on Mg(2+) as a cofactor. Mn(2+) is required as a cofactor.

It localises to the cytoplasm. The catalysed reaction is (2R,3S)-3-isopropylmalate + NAD(+) = 4-methyl-2-oxopentanoate + CO2 + NADH. It functions in the pathway amino-acid biosynthesis; L-leucine biosynthesis; L-leucine from 3-methyl-2-oxobutanoate: step 3/4. Catalyzes the oxidation of 3-carboxy-2-hydroxy-4-methylpentanoate (3-isopropylmalate) to 3-carboxy-4-methyl-2-oxopentanoate. The product decarboxylates to 4-methyl-2 oxopentanoate. The polypeptide is 3-isopropylmalate dehydrogenase (Mycobacterium leprae (strain Br4923)).